Consider the following 280-residue polypeptide: Para-Rep C2 (280 aa).

The region spanning 1-97 is the CRESS-DNA virus Rep endonuclease domain; the sequence is MARRYCFTLN…ETLISEIGIP (97 aa). The RCR-1 motif lies at 6-9; the sequence is CFTL. Residues E37 and H45 each coordinate a divalent metal cation. The short motif at 45–47 is the RCR-2 element; that stretch reads HLQ. The short motif at 54-75 is the Nuclear localization signal element; sequence NKIRLGGLKKKFGNRAHWEIAR. The For DNA cleavage activity role is filled by Y84. Residues 84-87 carry the RCR-3 motif; sequence YCCK. The short motif at 97 to 103 is the Nuclear localization signal element; the sequence is PVMKGSN. 172–180 contributes to the ATP binding site; the sequence is GSDGGEGKT.

This sequence belongs to the nanoviridea/circoviridae replication-associated protein family. As to quaternary structure, homooligomer (Potential). Rep binds to repeated DNA motifs (iterons). The cofactor is Mg(2+). Mn(2+) is required as a cofactor.

The protein localises to the host nucleus. The enzyme catalyses ATP + H2O = ADP + phosphate + H(+). Initiates and terminates the replication only of its own subviral DNA molecule. The closed circular ssDNA genome is first converted to a superhelical dsDNA. Rep binds a specific hairpin at the genome origin of replication. Introduces an endonucleolytic nick within the intergenic region of the genome, thereby initiating the rolling circle replication (RCR). Following cleavage, binds covalently to the 5'-phosphate of DNA as a tyrosyl ester. The cleavage gives rise to a free 3'-OH that serves as a primer for the cellular DNA polymerase. The polymerase synthesizes the (+) strand DNA by rolling circle mechanism. After one round of replication, a Rep-catalyzed nucleotidyl transfer reaction releases a circular single-stranded virus genome, thereby terminating the replication. Displays origin-specific DNA cleavage, nucleotidyl transferase, ATPase and helicase activities. The polypeptide is Para-Rep C2 (C2) (Subterranean clover stunt C2 alphasatellite (SCSC2A)).